The chain runs to 165 residues: Cystatin-like protein (165 aa).

The first 19 residues, 1–19, serve as a signal peptide directing secretion; sequence MDVALKLLLLAALTLLASA. 2 disulfide bridges follow: cysteine 80/cysteine 92 and cysteine 104/cysteine 118.

Involved in hypoxia tolerance. The sequence is that of Cystatin-like protein from Clarias batrachus (Walking catfish).